The chain runs to 331 residues: Tungstate uptake system ATP-binding protein TupC (331 aa).

The ABC transporter domain occupies 2 to 230 (IEISNLFFNY…NQGVKFCNFI (229 aa)). 34–41 (GANGSGKS) provides a ligand contact to ATP.

This sequence belongs to the ABC transporter superfamily. In terms of assembly, the complex is composed of two ATP-binding proteins (TupC), two transmembrane proteins (TupB) and a solute-binding protein (TupA).

It catalyses the reaction tungstate(in) + ATP + H2O = tungstate(out) + ADP + phosphate + H(+). Part of an ABC transporter complex involved in ultra-high affinity tungstate uptake. Probably responsible for energy coupling to the transport system. The sequence is that of Tungstate uptake system ATP-binding protein TupC from Campylobacter jejuni subsp. jejuni serotype O:2 (strain ATCC 700819 / NCTC 11168).